Here is a 311-residue protein sequence, read N- to C-terminus: tRNA (guanine-N(7)-)-methyltransferase (311 aa).

S-adenosyl-L-methionine-binding residues include E28, E53, and D103. D103 is an active-site residue. The substrate site is built by K107 and D139.

It belongs to the class I-like SAM-binding methyltransferase superfamily. TrmB family.

It carries out the reaction guanosine(46) in tRNA + S-adenosyl-L-methionine = N(7)-methylguanosine(46) in tRNA + S-adenosyl-L-homocysteine. It participates in tRNA modification; N(7)-methylguanine-tRNA biosynthesis. Its function is as follows. Catalyzes the formation of N(7)-methylguanine at position 46 (m7G46) in tRNA. The sequence is that of tRNA (guanine-N(7)-)-methyltransferase from Thermus thermophilus (strain ATCC BAA-163 / DSM 7039 / HB27).